An 857-amino-acid polypeptide reads, in one-letter code: Facilitated trehalose transporter Tret1-1 (857 aa).

Disordered regions lie at residues 1-28 (MSGRDSRGAGGGGGGHQPLSNAMGKLKE) and 62-203 (DPFL…KATS). The Cytoplasmic segment spans residues 1–392 (MSGRDSRGAG…VYRPTTNPIY (392 aa)). A compositionally biased stretch (polar residues) spans 69-81 (VSPQRHPQNTVRT). Basic and acidic residues predominate over residues 134–143 (EIREHRDRQQ). Over residues 171 to 181 (GNSNTNSNKAA) the composition is skewed to polar residues. Phosphoserine occurs at positions 248, 249, 250, 320, and 322. Residues 327–346 (LTSRQHFQQQRSISTDSRKS) form a disordered region. Polar residues predominate over residues 330–341 (RQHFQQQRSIST). Residues 393 to 413 (IWTQVLAALSVSLGSLVVGFV) traverse the membrane as a helical segment. Over 414-440 (SAYTSPALVSMTDRNITSFEVTQDAGS) the chain is Extracellular. An N-linked (GlcNAc...) asparagine glycan is attached at Asn-428. Residues 441–461 (WVGGIMPLAGLAGGIAGGPLI) form a helical membrane-spanning segment. Topologically, residues 462–473 (EYLGRRNTILAT) are cytoplasmic. A helical transmembrane segment spans residues 474–494 (AVPFIVSSLLIACAVNVAMVL). At 495 to 497 (CGR) the chain is on the extracellular side. Residues 498-518 (FLAGFCVGIASLSLPVYLGET) traverse the membrane as a helical segment. Residues 519–528 (VQPEVRGTLG) are Cytoplasmic-facing. A helical membrane pass occupies residues 529-549 (LLPTAFGNIGILLCFVAGSFM). N-linked (GlcNAc...) asparagine glycosylation is present at Asn-550. At 550–552 (NWS) the chain is on the extracellular side. A helical transmembrane segment spans residues 553–573 (MLAFLGAALPVPFLILMFLIP). Residues 574–636 (ETPRWFVGRG…ELFKRINLKP (63 aa)) lie on the Cytoplasmic side of the membrane. Residues 637-657 (LSISLGLMFFQQFSGINAVIF) traverse the membrane as a helical segment. Topologically, residues 658 to 673 (YTVQIFKDAGSTIDSN) are extracellular. A helical membrane pass occupies residues 674–694 (LCTIIVGIVNFFATFMGILLI). Residues 695–700 (DRLGRK) are Cytoplasmic-facing. A helical transmembrane segment spans residues 701-721 (ILLYISDIAMILTLSILGGFF). The Extracellular segment spans residues 722 to 740 (YCKAHGPDVSHLGWLPLTC). A helical membrane pass occupies residues 741–761 (FVIYILGFSLGFGPIPWLMMG). At 762-770 (EILPAKIRG) the chain is on the cytoplasmic side. A helical transmembrane segment spans residues 771-791 (PAASVVTAFNWFCTFVVTKTF). The Extracellular segment spans residues 792 to 801 (QDLTGAMGAH). Residues 802-822 (GAFWLFGAICFVGLFFVIIYV) traverse the membrane as a helical segment. Residues 823 to 857 (PETQGKTLEDIERKMMGRVRRMSSVANIKPLSFNM) lie on the Cytoplasmic side of the membrane. 2 positions are modified to phosphoserine: Ser-845 and Ser-846.

This sequence belongs to the major facilitator superfamily. Sugar transporter (TC 2.A.1.1) family. Trehalose transporter subfamily.

It is found in the cell membrane. Functionally, low-capacity facilitative transporter for trehalose. Does not transport maltose, sucrose or lactose. Mediates the bidirectional transfer of trehalose. Responsible for the transport of trehalose synthesized in the fat body and the incorporation of trehalose into other tissues that require a carbon source, thereby regulating trehalose levels in the hemolymph. The chain is Facilitated trehalose transporter Tret1-1 from Drosophila simulans (Fruit fly).